Consider the following 224-residue polypeptide: SPI-2 type 3 secretion system stator protein (224 aa).

This sequence belongs to the SctL stator family. In terms of assembly, the core secretion machinery of the T3SS is composed of approximately 20 different proteins, including cytoplasmic components, a base, an export apparatus and a needle. This subunit is part of the cytosolic complex. Interacts directly with SsaN/SctN2 (T3SS-2 ATPase).

The protein localises to the cytoplasm. In terms of biological role, component of the type III secretion system (T3SS), also called injectisome, which is used to inject bacterial effector proteins into eukaryotic host cells. Acts as a regulator of the SsaN/SctN2 ATPase activity. The polypeptide is SPI-2 type 3 secretion system stator protein (Salmonella typhimurium (strain LT2 / SGSC1412 / ATCC 700720)).